Here is a 117-residue protein sequence, read N- to C-terminus: Prefoldin subunit beta (117 aa).

It belongs to the prefoldin subunit beta family. Heterohexamer of two alpha and four beta subunits.

It is found in the cytoplasm. Its function is as follows. Molecular chaperone capable of stabilizing a range of proteins. Seems to fulfill an ATP-independent, HSP70-like function in archaeal de novo protein folding. In Methanococcoides burtonii (strain DSM 6242 / NBRC 107633 / OCM 468 / ACE-M), this protein is Prefoldin subunit beta.